The following is a 118-amino-acid chain: UPF0449 protein C19orf25 homolog (118 aa).

The residue at position 63 (tyrosine 63) is a Phosphotyrosine. The stretch at 69-105 (YVAMNQRLQQAGAQLEQKRADLQQAGEELERDISQVG) forms a coiled coil.

The protein belongs to the UPF0449 family.

This chain is UPF0449 protein C19orf25 homolog, found in Bos taurus (Bovine).